The following is a 529-amino-acid chain: MALKWTSVLLLIHLGCYFSSGSCGKVLVWTGEYSHWMNMKTILKELVQRGHEVTVLASSASILFDPNDAFTLKLEVYPTSLTKTEFENIIMQQVKRWSDIQKDSFWLYFSQEQEILWEFHDIFRNFCKDVVSNKKVMKKLQESRFDIIFADAFFPCGELLAALLNIPFVYSLCFTPGYTIERHSGGLIFPPSYIPVVMSKLSDQMTFMERVKNMIYVLYFDFWFQMCDMKKWDQFYSEVLGRPTTLFETMGKADIWLMRNSWSFQFPHPFLPNIDFVGGLHCKPAKPLPKEMEEFVQSSGENGVVVFSLGSVISNMTAERANVIATALAKIPQKVLWRFDGNKPDALGLNTRLYKWIPQNDLLGLPKTRAFITHGGANGIYEAIYHGIPMVGIPLFWDQPDNIAHMKAKGAAVRLDFHTMSSTDLLNALKTVINDPSYKENVMKLSIIQHDQPVKPLHRAVFWIEFVMCHKGAKHLRVAARDLTWFQYHSLDVIGFLLACVATVIFVVTKFCLFCFWKFARKGKKGKRD.

A signal peptide spans 1-24 (MALKWTSVLLLIHLGCYFSSGSCG). An N6-succinyllysine modification is found at lysine 135. Asparagine 315 carries N-linked (GlcNAc...) asparagine glycosylation. Residues 495-517 (GFLLACVATVIFVVTKFCLFCFW) form a helical membrane-spanning segment.

The protein belongs to the UDP-glycosyltransferase family. In terms of tissue distribution, expressed in the liver, breast and kidney.

The protein resides in the endoplasmic reticulum membrane. The protein localises to the cytoplasm. It localises to the perinuclear region. It carries out the reaction glucuronate acceptor + UDP-alpha-D-glucuronate = acceptor beta-D-glucuronoside + UDP + H(+). In terms of biological role, UDP-glucuronosyltransferase (UGT) that catalyzes phase II biotransformation reactions in which lipophilic substrates are conjugated with glucuronic acid to increase the metabolite's water solubility, thereby facilitating excretion into either the urine or bile. Essential for the elimination and detoxification of drugs, xenobiotics and endogenous compounds. Catalyzes the glucuronidation of endogenous steroid hormones such as androgens (androsterone, 3alpha-androstanediol) and estrogens (estradiol, estrone). Catalyzes the glucuronidation of bile acid substrates, which are natural detergents for dietary lipids absorption. Displays glucuronidation activity toward the phenolic compounds eugenol. Lack UDP-glucuronosyltransferase (UGT) activity. The chain is UDP-glucuronosyltransferase 2B28 from Homo sapiens (Human).